The chain runs to 355 residues: Elongation factor Ts (355 aa).

Residues 82 to 85 (TDFV) are involved in Mg(2+) ion dislocation from EF-Tu.

The protein belongs to the EF-Ts family.

The protein localises to the cytoplasm. Its function is as follows. Associates with the EF-Tu.GDP complex and induces the exchange of GDP to GTP. It remains bound to the aminoacyl-tRNA.EF-Tu.GTP complex up to the GTP hydrolysis stage on the ribosome. The protein is Elongation factor Ts of Wolinella succinogenes (strain ATCC 29543 / DSM 1740 / CCUG 13145 / JCM 31913 / LMG 7466 / NCTC 11488 / FDC 602W) (Vibrio succinogenes).